Consider the following 145-residue polypeptide: D-aminoacyl-tRNA deacylase (145 aa).

Positions Gly-137 to Pro-138 match the Gly-cisPro motif, important for rejection of L-amino acids motif.

The protein belongs to the DTD family. As to quaternary structure, homodimer.

Its subcellular location is the cytoplasm. It catalyses the reaction glycyl-tRNA(Ala) + H2O = tRNA(Ala) + glycine + H(+). The enzyme catalyses a D-aminoacyl-tRNA + H2O = a tRNA + a D-alpha-amino acid + H(+). An aminoacyl-tRNA editing enzyme that deacylates mischarged D-aminoacyl-tRNAs. Also deacylates mischarged glycyl-tRNA(Ala), protecting cells against glycine mischarging by AlaRS. Acts via tRNA-based rather than protein-based catalysis; rejects L-amino acids rather than detecting D-amino acids in the active site. By recycling D-aminoacyl-tRNA to D-amino acids and free tRNA molecules, this enzyme counteracts the toxicity associated with the formation of D-aminoacyl-tRNA entities in vivo and helps enforce protein L-homochirality. The sequence is that of D-aminoacyl-tRNA deacylase from Legionella pneumophila (strain Lens).